A 95-amino-acid chain; its full sequence is MADVEEWLTHARKVTQEASIGVDVTSIQECISAEPAQRVLVARRDAWRAICCAAFAALVAFAAINRVATIMLEKPAPTWVATPSAASPFGLLIGK.

The Cytoplasmic portion of the chain corresponds to 1–45 (MADVEEWLTHARKVTQEASIGVDVTSIQECISAEPAQRVLVARRD). Residues 46–68 (AWRAICCAAFAALVAFAAINRVA) form a helical membrane-spanning segment. At 69-95 (TIMLEKPAPTWVATPSAASPFGLLIGK) the chain is on the periplasmic side.

The protein to A.xylosoxydans NccY.

It is found in the cell inner membrane. Functionally, nickel and cobalt resistance proteins CnrA, CnrB, CnrC CnrH and CnrR may be involved in the regulation of CNR. Its function is as follows. CnrH alone is able to activate cnr expression, and both CnrY and CrnX are needed for nickel induction of CnrH. In the absence of wild-type CnrY (due either to a frameshift, PubMed:10671463 or absence of the transcript, PubMed:10671464), nickel and cobalt resistance is constitutive, indicating that CrnY may act as a repressor or an anti-sigma factor. The polypeptide is Nickel and cobalt resistance protein CnrY (cnrY) (Cupriavidus metallidurans (strain ATCC 43123 / DSM 2839 / NBRC 102507 / CH34) (Ralstonia metallidurans)).